We begin with the raw amino-acid sequence, 246 residues long: UDP-N-acetyl-D-mannosaminuronic acid transferase (246 aa).

The protein belongs to the glycosyltransferase 26 family.

It catalyses the reaction UDP-N-acetyl-alpha-D-mannosaminouronate + N-acetyl-alpha-D-glucosaminyl-di-trans,octa-cis-undecaprenyl diphosphate = beta-D-ManNAcA-(1-&gt;4)-alpha-D-GlcNAc-di-trans,octa-cis-undecaprenyl diphosphate + UDP + H(+). Its pathway is bacterial outer membrane biogenesis; enterobacterial common antigen biosynthesis. Its function is as follows. Catalyzes the synthesis of Und-PP-GlcNAc-ManNAcA (Lipid II), the second lipid-linked intermediate involved in enterobacterial common antigen (ECA) synthesis. The chain is UDP-N-acetyl-D-mannosaminuronic acid transferase from Escherichia fergusonii (strain ATCC 35469 / DSM 13698 / CCUG 18766 / IAM 14443 / JCM 21226 / LMG 7866 / NBRC 102419 / NCTC 12128 / CDC 0568-73).